The chain runs to 369 residues: Nuclear pore complex-interacting protein family member A7 (369 aa).

A disordered region spans residues 151–171 (SMKEREHREEERQVSEAEENG).

Belongs to the NPIP family.

This Homo sapiens (Human) protein is Nuclear pore complex-interacting protein family member A7 (NPIPA7).